We begin with the raw amino-acid sequence, 251 residues long: Derlin-1 (251 aa).

An N-acetylserine modification is found at serine 2. Over 2–15 the chain is Cytoplasmic; it reads SDIGDWFRSIPAIT. A helical transmembrane segment spans residues 16 to 31; the sequence is RYWFAATVAVPLVGKL. Over 32 to 69 the chain is Lumenal; that stretch reads GLISPAYLFLWPEAFLYRFQIWRPITATFYFPVGPGTG. The helical transmembrane segment at 70 to 89 threads the bilayer; that stretch reads FLYLVNLYFLYHYSTRLETG. At 90-94 the chain is on the cytoplasmic side; it reads AFDGR. A helical membrane pass occupies residues 95-115; that stretch reads PADYLFMLLFNWICIVITGLA. The Lumenal segment spans residues 116-122; the sequence is MDMQLLM. A helical transmembrane segment spans residues 123–137; it reads IPLIMSVLYVWAQLN. At 138 to 154 the chain is on the cytoplasmic side; that stretch reads RDMIVSFWFGTRFKACY. A helical transmembrane segment spans residues 155–166; it reads LPWVILGFNYII. Residues 167–170 lie on the Lumenal side of the membrane; it reads GGSV. Residues 171–189 traverse the membrane as a helical segment; that stretch reads INELIGNLVGHLYFFLMFR. The Cytoplasmic segment spans residues 190 to 251; it reads YPMDLGGRNF…WGQGFRLGDQ (62 aa). Residue serine 201 is modified to Phosphoserine. Phosphothreonine is present on threonine 202. A Phosphoserine modification is found at serine 226. The disordered stretch occupies residues 229–251; the sequence is RAADQNGGGGRHNWGQGFRLGDQ. The SHP-box motif lies at 241 to 248; sequence NWGQGFRL.

The protein belongs to the derlin family. Homotetramer. The four subunits of the tetramer are arranged in a twofold symmetry. Forms homo- and heterooligomers with DERL2 and DERL3; binding to DERL3 is poorer than that between DERL2 and DERL3. Interacts (via SHP-box motif) with VCP. Interacts with AMFR, SELENOS, SEL1L, SELENOK and SYVN1, as well as with SEL1L-SYVN1 and VCP-SELENOS protein complexes; this interaction is weaker than that observed between DERL2 and these complexes. Interacts with NGLY1 and YOD1. Does not bind to EDEM1. Interacts with DNAJB9. Interacts with RNF103. Interacts with HM13. Interacts with XBP1 isoform 1 (via luminal/ectodomain domain); the interaction obviates the need for ectodomain shedding prior HM13/SPP-mediated XBP1 isoform 1 cleavage. Interacts with the signal recognition particle/SRP and the SRP receptor; in the process of endoplasmic reticulum stress-induced pre-emptive quality control. May interact with UBXN6. Interacts with ZFAND2B; probably through VCP. Interacts with CCDC47. Interacts with C18orf32. May interact with TRAM1. Forms a complex with SVIP and VCP/p97.

The protein resides in the endoplasmic reticulum membrane. Functionally, functional component of endoplasmic reticulum-associated degradation (ERAD) for misfolded lumenal proteins. Forms homotetramers which encircle a large channel traversing the endoplasmic reticulum (ER) membrane. This allows the retrotranslocation of misfolded proteins from the ER into the cytosol where they are ubiquitinated and degraded by the proteasome. The channel has a lateral gate within the membrane which provides direct access to membrane proteins with no need to reenter the ER lumen first. May mediate the interaction between VCP and the misfolded protein. Also involved in endoplasmic reticulum stress-induced pre-emptive quality control, a mechanism that selectively attenuates the translocation of newly synthesized proteins into the endoplasmic reticulum and reroutes them to the cytosol for proteasomal degradation. By controlling the steady-state expression of the IGF1R receptor, indirectly regulates the insulin-like growth factor receptor signaling pathway. This is Derlin-1 from Pongo abelii (Sumatran orangutan).